Consider the following 1021-residue polypeptide: Ephrin type-B receptor 6 (1021 aa).

The signal sequence occupies residues 1 to 31 (MATEGAAQLGNRVAGMVCSLWVLLLVSSVLA). Residues 32-594 (LEEVLLDTTG…LSSQLPERLS (563 aa)) lie on the Extracellular side of the membrane. Positions 33–237 (EEVLLDTTGE…FSYTCPAVLR (205 aa)) constitute an Eph LBD domain. The tract at residues 163–182 (SFPSSSSSSSSSSSAAWAVG) is disordered. Low complexity predominate over residues 166–176 (SSSSSSSSSSS). 2 consecutive Fibronectin type-III domains span residues 369–486 (PPSA…TSHE) and 487–582 (VPSA…TLPQ). N-linked (GlcNAc...) asparagine glycosylation is present at asparagine 480. Residues 595–615 (LVIGSILGALAFLLLAAITVL) form a helical membrane-spanning segment. Residues 616–1021 (AVVFQRKRRG…HLRQQGSVEV (406 aa)) lie on the Cytoplasmic side of the membrane. The region spanning 670-919 (IKIEEVIGTG…QLVAAFDKMI (250 aa)) is the Protein kinase domain. Residue 676–684 (IGTGSFGEV) coordinates ATP. In terms of domain architecture, SAM spans 948–1012 (PCLDSPQAWL…LHHIQLLQQH (65 aa)). The PDZ-binding motif lies at 1019–1021 (VEV).

The protein belongs to the protein kinase superfamily. Tyr protein kinase family. Ephrin receptor subfamily. Interacts with CBL and EPHB1. Interacts with FYN; this interaction takes place in a ligand-independent manner. Ligand-binding increases phosphorylation on tyrosine residues. Phosphorylation on tyrosine residues is mediated by transphosphorylation by the catalytically active EPHB1 in a ligand-independent manner. Tyrosine phosphorylation of the receptor may act as a switch on the functional transition from cell adhesion/attraction to de-adhesion/repulsion. As to expression, expressed in brain. Expressed in non invasive breast carcinoma cell lines (at protein level). Strong expression in brain and pancreas, and weak expression in other tissues, such as heart, placenta, lung, liver, skeletal muscle and kidney. Expressed in breast non invasive tumors but not in metastatic lesions. Isoform 3 is expressed in cell lines of glioblastomas, anaplastic astrocytomas, gliosarcomas and astrocytomas. Isoform 3 is not detected in normal tissues.

Its subcellular location is the membrane. The protein resides in the secreted. In terms of biological role, kinase-defective receptor for members of the ephrin-B family. Binds to ephrin-B1 and ephrin-B2. Modulates cell adhesion and migration by exerting both positive and negative effects upon stimulation with ephrin-B2. Inhibits JNK activation, T-cell receptor-induced IL-2 secretion and CD25 expression upon stimulation with ephrin-B2. This is Ephrin type-B receptor 6 (EPHB6) from Homo sapiens (Human).